Consider the following 1107-residue polypeptide: Ubiquitin-associated protein 2-like (1107 aa).

Methionine 1 is modified (N-acetylmethionine). Residues 1 to 33 (MMTSVGTNRARGNWEQPQNQNQTQHKQRPQATA) are disordered. Residues 49-89 (DFEEKVKQLIDITGKNQDECVIALHDCNGDVNRAINVLLEG) enclose the UBA domain. Residues 92-229 (DTHSWEMVGK…NTWNNTGHFE (138 aa)) are disordered. Over residues 118-132 (EEGKENRDRDRDYSR) the composition is skewed to basic and acidic residues. Residues 133–145 (RRGGPPRRGRGAS) show a composition bias toward basic residues. Asymmetric dimethylarginine occurs at positions 187 and 190. Positions 213–226 (NYGNSSGNTWNNTG) are enriched in low complexity. Residues serine 376, serine 380, and serine 436 each carry the phosphoserine modification. Threonine 445 is modified (phosphothreonine). Disordered regions lie at residues 461–513 (AVAT…KKTS), 550–676 (SDYE…IPSL), and 689–814 (ANQH…LPPG). Phosphoserine occurs at positions 474, 487, 490, 491, and 497. Composition is skewed to low complexity over residues 494-505 (QSSSPQPAQQKL) and 554-589 (STPT…SQES). Residues 590-656 (GYQSGPIQST…TQLQTTQSVE (67 aa)) show a composition bias toward polar residues. Phosphoserine occurs at positions 624, 625, 628, and 629. Residues 665-675 (SESPSTSSIPS) are compositionally biased toward low complexity. Over residues 689 to 713 (ANQHSSSLSGLSHTEEIPNTTTTQH) the composition is skewed to polar residues. The span at 714–804 (SSALSTQQNT…STRSSVATTS (91 aa)) shows a compositional bias: low complexity. Phosphoserine occurs at positions 872 and 879. Disordered stretches follow at residues 885–921 (FGRG…LNPA) and 1060–1107 (QQPH…WGAN). 2 stretches are compositionally biased toward low complexity: residues 893–916 (PAPA…TQQT) and 1073–1087 (QDGQ…QTSS). Residues 1088-1107 (IPQKPQTNKSAYNSYSWGAN) are compositionally biased toward polar residues.

Interacts with BMI1. Part of a complex consisting of UBAP2L, BMI1 and RNF2. Interacts with G3BP1 (via NTF2 domain); promoting stress granule formation.

It localises to the nucleus. The protein resides in the chromosome. It is found in the cytoplasm. Its subcellular location is the stress granule. In terms of biological role, recruits the ubiquitination machinery to RNA polymerase II for polyubiquitination, removal and degradation, when the transcription-coupled nucleotide excision repair (TC-NER) machinery fails to resolve DNA damage. Plays an important role in the activity of long-term repopulating hematopoietic stem cells (LT-HSCs). Is a regulator of stress granule assembly, required for their efficient formation. Required for proper brain development and neocortex lamination. The polypeptide is Ubiquitin-associated protein 2-like (Mus musculus (Mouse)).